We begin with the raw amino-acid sequence, 91 residues long: MAHTRAHVFVSGRVQGVYYRATTRERAQDQGVNGWVRNLDDGRVEAVFEGPDADVEAMVEFCHEGSERANVTDVEVEYEDPEGVDGFEVRW.

The Acylphosphatase-like domain occupies arginine 5–tryptophan 91. Active-site residues include arginine 20 and asparagine 38.

The protein belongs to the acylphosphatase family.

The catalysed reaction is an acyl phosphate + H2O = a carboxylate + phosphate + H(+). The sequence is that of Acylphosphatase (acyP) from Haloarcula marismortui (strain ATCC 43049 / DSM 3752 / JCM 8966 / VKM B-1809) (Halobacterium marismortui).